The primary structure comprises 675 residues: DNA ligase (675 aa).

NAD(+)-binding positions include 43–47 (DYEYD), 92–93 (SM), and glutamate 122. Residue lysine 124 is the N6-AMP-lysine intermediate of the active site. Residues arginine 145, glutamate 179, lysine 295, and lysine 319 each coordinate NAD(+). Cysteine 413, cysteine 416, cysteine 431, and cysteine 436 together coordinate Zn(2+). The BRCT domain maps to 597-675 (SPDGYYKGKK…ETEAIAKFEQ (79 aa)).

The protein belongs to the NAD-dependent DNA ligase family. LigA subfamily. Mg(2+) serves as cofactor. Mn(2+) is required as a cofactor.

It catalyses the reaction NAD(+) + (deoxyribonucleotide)n-3'-hydroxyl + 5'-phospho-(deoxyribonucleotide)m = (deoxyribonucleotide)n+m + AMP + beta-nicotinamide D-nucleotide.. Its function is as follows. DNA ligase that catalyzes the formation of phosphodiester linkages between 5'-phosphoryl and 3'-hydroxyl groups in double-stranded DNA using NAD as a coenzyme and as the energy source for the reaction. It is essential for DNA replication and repair of damaged DNA. In Pediococcus pentosaceus (strain ATCC 25745 / CCUG 21536 / LMG 10740 / 183-1w), this protein is DNA ligase.